We begin with the raw amino-acid sequence, 606 residues long: RUN and FYVE domain-containing protein 2 (606 aa).

The RUN domain occupies 37 to 169 (DSDYPPLQQF…IDANLCVKGE (133 aa)). Residues 210–534 (EELNRQLNST…IKEANKALQG (325 aa)) adopt a coiled-coil conformation. The FYVE-type zinc-finger motif lies at 540 to 598 (DKEATHCKLCEKEFSLSKRKHHCRNCGEIFCNACSDNELPLPSSPKPVRVCDSCHALLI). Cysteine 546, cysteine 549, cysteine 562, cysteine 565, cysteine 570, cysteine 573, cysteine 590, and cysteine 593 together coordinate Zn(2+).

Interacts with BMX.

It localises to the nucleus. The polypeptide is RUN and FYVE domain-containing protein 2 (RUFY2) (Pongo abelii (Sumatran orangutan)).